A 317-amino-acid chain; its full sequence is Small ribosomal subunit protein RACK1 (317 aa).

7 WD repeats span residues 13–44, 61–91, 103–133, 146–178, 190–220, 231–260, and 281–311; these read GHSG…IMWK, GHSH…RLWD, GHTK…KLWN, SHTE…KVWN, GHTG…MLWD, DGGD…KIWD, and AEPP…RVWQ.

This sequence belongs to the WD repeat G protein beta family. Ribosomal protein RACK1 subfamily.

It is found in the cytoplasm. Involved in the recruitment, assembly and/or regulation of a variety of signaling molecules. Interacts with a wide variety of proteins and plays a role in many cellular processes. Required for VANGL2 membrane localization, inhibits Wnt signaling and regulates cellular polarization and oriented cell division during gastrulation. The polypeptide is Small ribosomal subunit protein RACK1 (gnb2l1) (Danio rerio (Zebrafish)).